Reading from the N-terminus, the 272-residue chain is uncharacterized protein (272 aa).

This sequence belongs to the sodium:galactoside symporter (TC 2.A.2) family.

This is an uncharacterized protein from Pseudescherichia vulneris (Escherichia vulneris).